The following is a 476-amino-acid chain: Phosphomethylpyrimidine synthase (476 aa).

The segment at 1 to 27 (MSTQLQHARDGTVTDAMRRVADREGRD) is disordered. A compositionally biased stretch (basic and acidic residues) spans 7–27 (HARDGTVTDAMRRVADREGRD). Substrate-binding positions include N67, M96, Y125, H160, 180 to 182 (SRG), 221 to 224 (DGLR), and E260. H264 serves as a coordination point for Zn(2+). Y287 contributes to the substrate binding site. H328 lines the Zn(2+) pocket. [4Fe-4S] cluster contacts are provided by C408, C411, and C416. Residues 425-476 (RDAGDDADDMTELTTETDLSESAAAEVNRPPTGTHDAPAAEQAPSPGDDDDD) form a disordered region. Over residues 436 to 447 (ELTTETDLSESA) the composition is skewed to low complexity.

This sequence belongs to the ThiC family. The cofactor is [4Fe-4S] cluster.

It catalyses the reaction 5-amino-1-(5-phospho-beta-D-ribosyl)imidazole + S-adenosyl-L-methionine = 4-amino-2-methyl-5-(phosphooxymethyl)pyrimidine + CO + 5'-deoxyadenosine + formate + L-methionine + 3 H(+). The protein operates within cofactor biosynthesis; thiamine diphosphate biosynthesis. Its function is as follows. Catalyzes the synthesis of the hydroxymethylpyrimidine phosphate (HMP-P) moiety of thiamine from aminoimidazole ribotide (AIR) in a radical S-adenosyl-L-methionine (SAM)-dependent reaction. The sequence is that of Phosphomethylpyrimidine synthase from Halobacterium salinarum (strain ATCC 29341 / DSM 671 / R1).